Reading from the N-terminus, the 269-residue chain is Aquaporin-1 (269 aa).

Residues 2-11 (ASEFKKKLFW) lie on the Cytoplasmic side of the membrane. The helical transmembrane segment at 12 to 29 (RAVVAEFLATTLFVFISI) threads the bilayer. Residues 30–46 (GSALGFKYPVGNNQTAV) lie on the Extracellular side of the membrane. N-linked (GlcNAc...) asparagine glycosylation occurs at N42. A helical membrane pass occupies residues 47–65 (QDNVKVSLAFGLSIATLAQ). Residues 66 to 68 (SVG) lie on the Cytoplasmic side of the membrane. Residues 69–82 (HISGAHLNPAVTLG) lie within the membrane without spanning it. Residues 76–78 (NPA) carry the NPA 1 motif. Residues 83 to 90 (LLLSCQIS) lie on the Cytoplasmic side of the membrane. A helical membrane pass occupies residues 91–109 (IFRALMYIIAQCVGAIVAT). Residues 110–133 (AILSGITSSLTGNSLGRNDLADGV) lie on the Extracellular side of the membrane. The helical transmembrane segment at 134 to 153 (NSGQGLGIEIIGTLQLVLCV) threads the bilayer. Residues 154 to 163 (LATTDRRRRD) are Cytoplasmic-facing. The helical transmembrane segment at 164 to 181 (LGGSAPLAIGLSVALGHL) threads the bilayer. Residues 182 to 186 (LAIDY) are Extracellular-facing. An intramembrane segment occupies 187–199 (TGCGINPARSFGS). The short motif at 192–194 (NPA) is the NPA 2 element. Over 200–206 (AVITHNF) the chain is Extracellular. N205 carries an N-linked (GlcNAc...) asparagine glycan. A helical membrane pass occupies residues 207 to 224 (SNHWIFWVGPFIGGALAV). The Cytoplasmic portion of the chain corresponds to 225-269 (LIYDFILAPRSSDLTDRVKVWTSGQVEEYDLDADDINSRVEMKPK). S247 is modified (phosphoserine). Position 253 is a phosphotyrosine (Y253). S262 bears the Phosphoserine mark.

Belongs to the MIP/aquaporin (TC 1.A.8) family. In terms of assembly, homotetramer; each monomer provides an independent water pore. Component of the ankyrin-1 complex in the erythrocyte, composed of ANK1, RHCE, RHAG, SLC4A1, EPB42, GYPA, GYPB and AQP1. Interacts with EPHB2; involved in endolymph production in the inner ear. Identified in a complex with STOM. Interacts (via the N-terminal) with ANK1 (via ANK 1-5 repeats). Interacts (via the C-terminal) with EPB42. As to expression, detected in erythrocytes (at protein level). Expressed in a number of tissues including erythrocytes, renal tubules, retinal pigment epithelium, heart, lung, skeletal muscle, kidney and pancreas. Weakly expressed in brain, placenta and liver.

It localises to the cell membrane. It carries out the reaction H2O(in) = H2O(out). It catalyses the reaction nitric oxide(out) = nitric oxide(in). The enzyme catalyses CO2(out) = CO2(in). The catalysed reaction is glycerol(in) = glycerol(out). It carries out the reaction H2O2(out) = H2O2(in). It catalyses the reaction K(+)(in) = K(+)(out). The enzyme catalyses Na(+)(in) = Na(+)(out). Its activity is regulated as follows. The water channel activity is inhibited by P-choloromercuribenzene sulphonate and diethylpyrocarbonate(DPPC). The glycerol channel activity is inhibited by P-choloromercuribenzene sulphonate, diethylpyrocarbonate(DPPC), phloretin and Cu(2+). Inhibited by mercury. Its function is as follows. Forms a water channel that facilitates the transport of water across cell membranes, playing a crucial role in water homeostasis in various tissues. Could also be permeable to small solutes including hydrogen peroxide, glycerol and gases such as amonnia (NH3), nitric oxide (NO) and carbon dioxide (CO2). Recruited to the ankyrin-1 complex, a multiprotein complex of the erythrocyte membrane, it could be part of a CO2 metabolon, linking facilitated diffusion of CO2 across the membrane, anion exchange of Cl(-)/HCO3(-) and interconversion of dissolved CO2 and carbonic acid in the cytosol. In vitro, it shows non-selective gated cation channel activity and may be permeable to cations like K(+) and Na(+) in vivo. The protein is Aquaporin-1 of Homo sapiens (Human).